The following is a 218-amino-acid chain: UPF0711 protein C18orf21 homolog (218 aa).

Phosphoserine is present on S126. The span at 130-146 (ASAASKASPKTPKRAAA) shows a compositional bias: low complexity. The tract at residues 130–192 (ASAASKASPK…NGSKRKKHFS (63 aa)) is disordered. Phosphothreonine is present on T140. The span at 147-156 (GSTNISQSVH) shows a compositional bias: polar residues. Low complexity predominate over residues 161–172 (RSPSSTVRTPTS). Over residues 173-183 (GQSTPICSSRN) the composition is skewed to polar residues.

It belongs to the UPF0711 family.

This chain is UPF0711 protein C18orf21 homolog, found in Rattus norvegicus (Rat).